The chain runs to 162 residues: Balbiani ring protein 2 (162 aa).

The tract at residues Cys-1–Thr-31 is last constant region. The interval Val-32–Lys-51 is last Cys-1 repeat. The unique region stretch occupies residues Lys-52–Ser-162.

Salivary gland.

The protein resides in the secreted. In terms of biological role, used by the larvae to construct a supramolecular structure, the larval tube. The sequence is that of Balbiani ring protein 2 (BR2) from Chironomus pallidivittatus (Midge).